The primary structure comprises 250 residues: Cyclin-Q (250 aa).

Methionine 1 is subject to N-acetylmethionine. The segment covering 1–10 has biased composition (basic and acidic residues); sequence MEAVRPDSCE. The segment at 1–22 is disordered; that stretch reads MEAVRPDSCERGTAAARAEERP.

The protein belongs to the cyclin family. Cyclin-like FAM58 subfamily. As to quaternary structure, associates with CDK10 to promote its kinase activity.

Activating cyclin for the cyclin-associated kinase CDK10. This Rattus norvegicus (Rat) protein is Cyclin-Q (Ccnq).